The primary structure comprises 223 residues: PRA1 family protein B5 (223 aa).

The next 5 helical transmembrane spans lie at 83–103, 105–125, 146–166, 170–190, and 196–216; these read SSYFRVNYVCIVALILGFSLL, HPFSLILLLCLAASWLFLYLF, GGLILSTIAVIFFTSVGSVLI, MIGIATICVHGAFRAPDDLFL, and AASGFLSFIGVPAIPSVAPSA.

The protein belongs to the PRA1 family. Interacts with PRA1B1, PRA1B2, PRA1B3, PRA1B4, PRA1B6 and PRA1E. In terms of tissue distribution, expressed in roots, lateral roots, lateral root caps, columella cells, leaves, and shoot apex.

It localises to the endosome membrane. May be involved in both secretory and endocytic intracellular trafficking in the endosomal/prevacuolar compartments. This chain is PRA1 family protein B5 (PRA1B5), found in Arabidopsis thaliana (Mouse-ear cress).